The following is a 263-amino-acid chain: HTH-type transcriptional repressor NanR (263 aa).

The disordered stretch occupies residues 1 to 22; it reads MGLMNAFDSQTEDSSPAIGRNL. One can recognise an HTH gntR-type domain in the interval 30–98; the sequence is KKLSEMVEEE…NGERARVSRP (69 aa). A DNA-binding region (H-T-H motif) is located at residues 58–77; the sequence is ERELMAFFNVGRPSVREALA.

This sequence belongs to the NanR family.

Functionally, transcriptional repressor that controls expression of the genes required for the catabolism of sialic acids. In Shigella boydii serotype 4 (strain Sb227), this protein is HTH-type transcriptional repressor NanR.